The sequence spans 367 residues: Chorismate synthase (367 aa).

Arginine 48 and arginine 54 together coordinate NADP(+). Residues 125–127 (RSS), 238–239 (NA), glycine 278, 293–297 (KPTSS), and arginine 319 contribute to the FMN site.

The protein belongs to the chorismate synthase family. Homotetramer. The cofactor is FMNH2.

The catalysed reaction is 5-O-(1-carboxyvinyl)-3-phosphoshikimate = chorismate + phosphate. The protein operates within metabolic intermediate biosynthesis; chorismate biosynthesis; chorismate from D-erythrose 4-phosphate and phosphoenolpyruvate: step 7/7. Functionally, catalyzes the anti-1,4-elimination of the C-3 phosphate and the C-6 proR hydrogen from 5-enolpyruvylshikimate-3-phosphate (EPSP) to yield chorismate, which is the branch point compound that serves as the starting substrate for the three terminal pathways of aromatic amino acid biosynthesis. This reaction introduces a second double bond into the aromatic ring system. In Xanthomonas campestris pv. campestris (strain 8004), this protein is Chorismate synthase.